Consider the following 345-residue polypeptide: Hemin transport protein HmuS (345 aa).

The protein to Y.enterocolitica HemS.

In terms of biological role, part of the binding-protein-dependent transport system for hemin. The polypeptide is Hemin transport protein HmuS (hmuS) (Yersinia pestis).